The sequence spans 521 residues: Signal recognition particle protein (521 aa).

GTP-binding positions include 107-114 (GLQGSGKT), 196-200 (DTAGR), and 254-257 (TKLD). Residues 436–505 (GGMGIPGMGR…MPDGLNELPP (70 aa)) form a disordered region. The span at 447–462 (SATRKSKGGKGKKRAR) shows a compositional bias: basic residues.

Belongs to the GTP-binding SRP family. SRP54 subfamily. Part of the signal recognition particle protein translocation system, which is composed of SRP and FtsY.

Its subcellular location is the cytoplasm. It catalyses the reaction GTP + H2O = GDP + phosphate + H(+). Functionally, involved in targeting and insertion of nascent membrane proteins into the cytoplasmic membrane. Binds to the hydrophobic signal sequence of the ribosome-nascent chain (RNC) as it emerges from the ribosomes. The SRP-RNC complex is then targeted to the cytoplasmic membrane where it interacts with the SRP receptor FtsY. This chain is Signal recognition particle protein, found in Mycobacterium leprae (strain TN).